Reading from the N-terminus, the 632-residue chain is Myrcene synthase TPS3FN, chloroplastic (632 aa).

The N-terminal 55 residues, 1–55 (MHCMAVHQFSPSIVSSLPTISTYNNNHFCRFFTPKTSISPISKTKSKSSTCYPIQ), are a transit peptide targeting the chloroplast. 5 residues coordinate (2E)-geranyl diphosphate: Arg-343, Asp-380, Asp-384, Arg-524, and Asp-527. 2 residues coordinate Mg(2+): Asp-380 and Asp-384. The short motif at 380-384 (DDIYD) is the DDXXD motif element. Mg(2+)-binding residues include Asp-527, Thr-531, and Glu-535.

Belongs to the terpene synthase family. Tpsb subfamily. Mg(2+) serves as cofactor. Requires Mn(2+) as cofactor. Expressed in glandular trichomes two to four weeks after flowering onset.

It is found in the plastid. The protein resides in the chloroplast. It catalyses the reaction (2E)-geranyl diphosphate = beta-myrcene + diphosphate. The protein operates within secondary metabolite biosynthesis; terpenoid biosynthesis. In terms of biological role, involved in monoterpene (C10) olefins biosynthesis, constituants of cannabinoids and terpenoids-rich resins. Catalyzes strictly the conversion of (2E)-geranyl diphosphate to beta-myrcene. The polypeptide is Myrcene synthase TPS3FN, chloroplastic (Cannabis sativa (Hemp)).